An 886-amino-acid chain; its full sequence is DNA mismatch repair protein MutS (886 aa).

626–633 contacts ATP; the sequence is GPNMGGKS.

The protein belongs to the DNA mismatch repair MutS family.

This protein is involved in the repair of mismatches in DNA. It is possible that it carries out the mismatch recognition step. This protein has a weak ATPase activity. In Burkholderia ambifaria (strain ATCC BAA-244 / DSM 16087 / CCUG 44356 / LMG 19182 / AMMD) (Burkholderia cepacia (strain AMMD)), this protein is DNA mismatch repair protein MutS.